Consider the following 306-residue polypeptide: Large ribosomal subunit protein bL19m (306 aa).

Positions 34 to 43 (ENQEEQKKEA) are enriched in basic and acidic residues. Residues 34–53 (ENQEEQKKEAPPTTPTSPVN) form a disordered region.

The protein belongs to the bacterial ribosomal protein bL19 family. Component of the mitochondrial ribosome large subunit (39S) which comprises a 16S rRNA and about 50 distinct proteins.

It localises to the mitochondrion. The sequence is that of Large ribosomal subunit protein bL19m (mRpL19) from Drosophila melanogaster (Fruit fly).